The following is a 243-amino-acid chain: Nuclear protein UL4 homolog (243 aa).

The interval arginine 193–phenylalanine 226 is disordered. Over residues histidine 205–proline 219 the composition is skewed to polar residues.

It belongs to the alphaherpesvirinae HHV-1 UL4 family.

The protein resides in the host nucleus. This Varicella-zoster virus (strain Oka vaccine) (HHV-3) protein is Nuclear protein UL4 homolog.